Here is an 83-residue protein sequence, read N- to C-terminus: Arminin 4364 (83 aa).

The N-terminal stretch at 1–18 (MKTVFAILFLAFIALTYA) is a signal peptide. A propeptide spanning residues 19–55 (RSYEDVKEEIKNEVEKEILEDLEKETDELNERKINDA) is cleaved from the precursor. At Val80 the chain carries Valine amide.

The protein belongs to the arminin family. In terms of tissue distribution, expressed in entodermal epithelium along the body column.

The protein localises to the secreted. Its subcellular location is the target cell membrane. Antimicrobial peptide with a broad-spectrum antimicrobial activity. Keeps its antibacterial activity under a wide range of salt concentrations that mimic physiological conditions of human blood, which is surprising, since Hydra is an obligate freshwater animal with nearly no salt tolerance. Does not affect red blood cells. The polypeptide is Arminin 4364 (Hydra vulgaris (Hydra)).